Reading from the N-terminus, the 364-residue chain is DNA polymerase IV (364 aa).

The UmuC domain occupies 14 to 198 (IIHIDMDAFF…LPIEKFHGVG (185 aa)). 2 residues coordinate Mg(2+): D18 and D116. E117 is an active-site residue.

This sequence belongs to the DNA polymerase type-Y family. In terms of assembly, monomer. Mg(2+) serves as cofactor.

Its subcellular location is the cytoplasm. It carries out the reaction DNA(n) + a 2'-deoxyribonucleoside 5'-triphosphate = DNA(n+1) + diphosphate. In terms of biological role, poorly processive, error-prone DNA polymerase involved in untargeted mutagenesis. Copies undamaged DNA at stalled replication forks, which arise in vivo from mismatched or misaligned primer ends. These misaligned primers can be extended by PolIV. Exhibits no 3'-5' exonuclease (proofreading) activity. May be involved in translesional synthesis, in conjunction with the beta clamp from PolIII. The sequence is that of DNA polymerase IV from Streptococcus pyogenes serotype M12 (strain MGAS2096).